The primary structure comprises 82 residues: Small ribosomal subunit protein bS16 (82 aa).

It belongs to the bacterial ribosomal protein bS16 family.

In Microcystis aeruginosa (strain NIES-843 / IAM M-2473), this protein is Small ribosomal subunit protein bS16.